A 197-amino-acid chain; its full sequence is MNSPSDSFTRWVIDEIEASIDVKRRTIETQAPMIVAIAERVVETFRRGGKLLLCGNGGSAADAQHIAAEFVSRFRRERHGLPAIALTTDTSILTAISNDYGYERVFARQVEALGRPGDMVIGISTSGISASVIAAMRAARNGGMATVGFTGASGGTLVDHVDLCLCVPSHNTARIQEVHITVAHVVCEIVERTLFEE.

The 157-residue stretch at 41–197 (VVETFRRGGK…EIVERTLFEE (157 aa)) folds into the SIS domain. 56–58 (NGG) provides a ligand contact to substrate. Zn(2+) is bound by residues His65 and Glu69. Substrate-binding positions include Glu69, 98 to 99 (ND), 124 to 126 (STS), Ser129, and Gln176. Residues Gln176 and His184 each contribute to the Zn(2+) site.

This sequence belongs to the SIS family. GmhA subfamily. Zn(2+) serves as cofactor.

Its subcellular location is the cytoplasm. It carries out the reaction 2 D-sedoheptulose 7-phosphate = D-glycero-alpha-D-manno-heptose 7-phosphate + D-glycero-beta-D-manno-heptose 7-phosphate. It participates in carbohydrate biosynthesis; D-glycero-D-manno-heptose 7-phosphate biosynthesis; D-glycero-alpha-D-manno-heptose 7-phosphate and D-glycero-beta-D-manno-heptose 7-phosphate from sedoheptulose 7-phosphate: step 1/1. Functionally, catalyzes the isomerization of sedoheptulose 7-phosphate in D-glycero-D-manno-heptose 7-phosphate. The sequence is that of Phosphoheptose isomerase from Roseiflexus sp. (strain RS-1).